A 323-amino-acid polypeptide reads, in one-letter code: Thiamine-monophosphate kinase (323 aa).

The Mg(2+) site is built by D30, S45, T46, and D47. H54 provides a ligand contact to substrate. D75 and D122 together coordinate Mg(2+). ATP contacts are provided by residues 121-122 (GD) and R146. D212 is a binding site for Mg(2+). S214 lines the ATP pocket. D215 is a Mg(2+) binding site. Substrate-binding residues include E263 and F319.

It belongs to the thiamine-monophosphate kinase family.

The catalysed reaction is thiamine phosphate + ATP = thiamine diphosphate + ADP. It participates in cofactor biosynthesis; thiamine diphosphate biosynthesis; thiamine diphosphate from thiamine phosphate: step 1/1. Catalyzes the ATP-dependent phosphorylation of thiamine-monophosphate (TMP) to form thiamine-pyrophosphate (TPP), the active form of vitamin B1. In Buchnera aphidicola subsp. Acyrthosiphon pisum (strain APS) (Acyrthosiphon pisum symbiotic bacterium), this protein is Thiamine-monophosphate kinase.